Here is a 227-residue protein sequence, read N- to C-terminus: Protein GET1 (227 aa).

Residues 1-3 lie on the Lumenal side of the membrane; the sequence is MSL. Residues 4–23 form a helical membrane-spanning segment; it reads LLTVFLIVFVTQLISWIGQN. Residues 24 to 107 are Cytoplasmic-facing; it reads VLLEWAYNLY…SFSTKFNAVI (84 aa). Residues 72–96 are a coiled coil; sequence AKLRRSVDKGLAELEKLNSEIATAK. Residues 108–128 traverse the membrane as a helical segment; sequence WALTSGVNLVIGWWYGRKAVF. The Lumenal portion of the chain corresponds to 129–151; it reads YLPEGWMGPLTWWFSFPFAPRGS. The chain crosses the membrane as a helical span at residues 152–168; that stretch reads VSVGVWSFACKRVLLVL. The Cytoplasmic portion of the chain corresponds to 169–227; that stretch reads ERMVKELFFAETQAKEVPVGFSPSSSSSSTPNPMSKASSGSPSPRRRTTVTVESEDEKS. The tract at residues 184 to 227 is disordered; it reads EVPVGFSPSSSSSSTPNPMSKASSGSPSPRRRTTVTVESEDEKS. The span at 190–211 shows a compositional bias: low complexity; the sequence is SPSSSSSSTPNPMSKASSGSPS.

The protein belongs to the WRB/GET1 family. As to quaternary structure, interacts with GET3.

It is found in the endoplasmic reticulum membrane. Required for the post-translational delivery of tail-anchored (TA) proteins to the endoplasmic reticulum. Acts as a membrane receptor for soluble GET3, which recognizes and selectively binds the transmembrane domain of TA proteins in the cytosol. This is Protein GET1 from Coprinopsis cinerea (strain Okayama-7 / 130 / ATCC MYA-4618 / FGSC 9003) (Inky cap fungus).